Reading from the N-terminus, the 275-residue chain is Dermonecrotic toxin LamSicTox-alphaIV1i (275 aa).

H5 is an active-site residue. The Mg(2+) site is built by E25 and D27. H41 functions as the Nucleophile in the catalytic mechanism. Disulfide bonds link C45-C51 and C47-C192. Mg(2+) is bound at residue D85.

This sequence belongs to the arthropod phospholipase D family. Class II subfamily. It depends on Mg(2+) as a cofactor. Expressed by the venom gland.

It is found in the secreted. The catalysed reaction is an N-(acyl)-sphingosylphosphocholine = an N-(acyl)-sphingosyl-1,3-cyclic phosphate + choline. It catalyses the reaction an N-(acyl)-sphingosylphosphoethanolamine = an N-(acyl)-sphingosyl-1,3-cyclic phosphate + ethanolamine. It carries out the reaction a 1-acyl-sn-glycero-3-phosphocholine = a 1-acyl-sn-glycero-2,3-cyclic phosphate + choline. The enzyme catalyses a 1-acyl-sn-glycero-3-phosphoethanolamine = a 1-acyl-sn-glycero-2,3-cyclic phosphate + ethanolamine. Functionally, dermonecrotic toxins cleave the phosphodiester linkage between the phosphate and headgroup of certain phospholipids (sphingolipid and lysolipid substrates), forming an alcohol (often choline) and a cyclic phosphate. This toxin acts on sphingomyelin (SM). It may also act on ceramide phosphoethanolamine (CPE), lysophosphatidylcholine (LPC) and lysophosphatidylethanolamine (LPE), but not on lysophosphatidylserine (LPS), and lysophosphatidylglycerol (LPG). It acts by transphosphatidylation, releasing exclusively cyclic phosphate products as second products. Induces dermonecrosis, hemolysis, increased vascular permeability, edema, inflammatory response, and platelet aggregation. This is Dermonecrotic toxin LamSicTox-alphaIV1i from Loxosceles amazonica (Recluse spider).